Here is a 671-residue protein sequence, read N- to C-terminus: Nucleolar GTP-binding protein 1 (671 aa).

One can recognise an OBG-type G domain in the interval R169–L350. GTP-binding positions include G175–S182, D221–I225, and N289–D292. Positions V516–R671 are disordered. The span at R595–R605 shows a compositional bias: polar residues. 2 stretches are compositionally biased toward basic residues: residues N631–N640 and R654–R671.

Belongs to the TRAFAC class OBG-HflX-like GTPase superfamily. OBG GTPase family. NOG subfamily.

Its subcellular location is the nucleus. The protein localises to the nucleolus. Functionally, involved in the biogenesis of the 60S ribosomal subunit. This is Nucleolar GTP-binding protein 1 from Arabidopsis thaliana (Mouse-ear cress).